The sequence spans 309 residues: Mitochondrial fission regulator 1-like (309 aa).

The tract at residues 189-221 (DVTEEDEEEEEEEDREEEEEDVSELVPDPMPPV) is disordered. A compositionally biased stretch (acidic residues) spans 190–211 (VTEEDEEEEEEEDREEEEEDVS). At Ser-253 the chain carries Phosphoserine.

The protein belongs to the MTFR1 family.

It is found in the mitochondrion outer membrane. Functionally, mitochondrial protein required for adaptation of miochondrial dynamics to metabolic changes. Regulates mitochondrial morphology at steady state and mediates AMPK-dependent stress-induced mitochondrial fragmentation via the control of OPA1 levels. This is Mitochondrial fission regulator 1-like (mtfr1l) from Danio rerio (Zebrafish).